Reading from the N-terminus, the 66-residue chain is Large ribosomal subunit protein uL29 (66 aa).

This sequence belongs to the universal ribosomal protein uL29 family.

The protein is Large ribosomal subunit protein uL29 of Mesorhizobium japonicum (strain LMG 29417 / CECT 9101 / MAFF 303099) (Mesorhizobium loti (strain MAFF 303099)).